The following is a 237-amino-acid chain: tRNA(His) guanylyltransferase (237 aa).

Residues D29, G30, and D77 each contribute to the Mg(2+) site. Residues 29–34 (DGKHFH) and 76–77 (SD) each bind GTP.

It belongs to the tRNA(His) guanylyltransferase family. The cofactor is Mg(2+).

The catalysed reaction is a 5'-end ribonucleotide-tRNA(His) + GTP + ATP + H2O = a 5'-end phospho-guanosine-ribonucleotide-tRNA(His) + AMP + 2 diphosphate + H(+). Its function is as follows. Adds a GMP to the 5'-end of tRNA(His) after transcription and RNase P cleavage. This is tRNA(His) guanylyltransferase (THG1) from Eremothecium gossypii (strain ATCC 10895 / CBS 109.51 / FGSC 9923 / NRRL Y-1056) (Yeast).